The following is a 380-amino-acid chain: MASLAAANAEFCFNLFREMDDNQGNGNVFFSSLSLFAALALVRLGAQDDSLSQIDKLLHVNTASGYGNSSNSQSGLQSQLKRVFSDINASHKDYDLSIVNGLFAEKVYGFHKDYIECAEKLYDAKVERVDFTNHLEDTRRNINKWVENETHGKIKNVIGEGGISSSAVMVLVNAVYFKGKWQSAFTKSETINCHFKSPKCSGKAVAMMHQERKFNLSVIEDPSMKILELRYNGGINMYVLLPENDLSEIENKLTFQNLMEWTNPRRMTSKYVEVFFPQFKIEKNYEMKQYLRALGLKDIFDESKADLSGIASGGRLYISRMMHKSYIEVTEEGTEATAATGSNIVEKQLPQSTLFRADHPFLFVIRKDDIILFSGKVSCP.

A phosphoserine mark is found at Ser217 and Ser223.

The protein belongs to the serpin family. Ov-serpin subfamily. As to expression, predominantly expressed in mesangial cells. Expressed in the epidermis of the whole body.

The protein resides in the cytoplasm. In terms of biological role, might function as an inhibitor of Lys-specific proteases. Might influence the maturation of megakaryocytes via its action as a serpin. This Homo sapiens (Human) protein is Serpin B7 (SERPINB7).